We begin with the raw amino-acid sequence, 203 residues long: Holliday junction branch migration complex subunit RuvA (203 aa).

Positions 1-64 (MIGRLRGIII…EDAQLLYGFN (64 aa)) are domain I. The segment at 65–142 (NKQERTLFKE…KGLHGDLFTP (78 aa)) is domain II. Residues 143-154 (AADLVLTSPASP) form a flexible linker region. Positions 155-203 (ATDDAEQEAVAALVALGYKPQEASRMVSKIARPDASSETLIREALRAAL) are domain III.

This sequence belongs to the RuvA family. In terms of assembly, homotetramer. Forms an RuvA(8)-RuvB(12)-Holliday junction (HJ) complex. HJ DNA is sandwiched between 2 RuvA tetramers; dsDNA enters through RuvA and exits via RuvB. An RuvB hexamer assembles on each DNA strand where it exits the tetramer. Each RuvB hexamer is contacted by two RuvA subunits (via domain III) on 2 adjacent RuvB subunits; this complex drives branch migration. In the full resolvosome a probable DNA-RuvA(4)-RuvB(12)-RuvC(2) complex forms which resolves the HJ.

It is found in the cytoplasm. Its function is as follows. The RuvA-RuvB-RuvC complex processes Holliday junction (HJ) DNA during genetic recombination and DNA repair, while the RuvA-RuvB complex plays an important role in the rescue of blocked DNA replication forks via replication fork reversal (RFR). RuvA specifically binds to HJ cruciform DNA, conferring on it an open structure. The RuvB hexamer acts as an ATP-dependent pump, pulling dsDNA into and through the RuvAB complex. HJ branch migration allows RuvC to scan DNA until it finds its consensus sequence, where it cleaves and resolves the cruciform DNA. In Shigella boydii serotype 18 (strain CDC 3083-94 / BS512), this protein is Holliday junction branch migration complex subunit RuvA.